A 115-amino-acid chain; its full sequence is Hydrogenase maturation factor HypA (115 aa).

H2 contributes to the Ni(2+) binding site. Residues C73, C76, C89, and C92 each coordinate Zn(2+).

The protein belongs to the HypA/HybF family.

Involved in the maturation of [NiFe] hydrogenases. Required for nickel insertion into the metal center of the hydrogenase. This is Hydrogenase maturation factor HypA from Nitrosospira multiformis (strain ATCC 25196 / NCIMB 11849 / C 71).